A 265-amino-acid chain; its full sequence is Hydroxyethylthiazole kinase (265 aa).

Substrate is bound at residue Met-50. Positions 125 and 171 each coordinate ATP. Substrate is bound at residue Gly-198.

It belongs to the Thz kinase family. Mg(2+) serves as cofactor.

It carries out the reaction 5-(2-hydroxyethyl)-4-methylthiazole + ATP = 4-methyl-5-(2-phosphooxyethyl)-thiazole + ADP + H(+). It functions in the pathway cofactor biosynthesis; thiamine diphosphate biosynthesis; 4-methyl-5-(2-phosphoethyl)-thiazole from 5-(2-hydroxyethyl)-4-methylthiazole: step 1/1. Functionally, catalyzes the phosphorylation of the hydroxyl group of 4-methyl-5-beta-hydroxyethylthiazole (THZ). This is Hydroxyethylthiazole kinase from Salmonella schwarzengrund (strain CVM19633).